The sequence spans 356 residues: Histidinol-phosphate aminotransferase (356 aa).

Residue K210 is modified to N6-(pyridoxal phosphate)lysine.

It belongs to the class-II pyridoxal-phosphate-dependent aminotransferase family. Histidinol-phosphate aminotransferase subfamily. In terms of assembly, homodimer. Pyridoxal 5'-phosphate is required as a cofactor.

It carries out the reaction L-histidinol phosphate + 2-oxoglutarate = 3-(imidazol-4-yl)-2-oxopropyl phosphate + L-glutamate. It participates in amino-acid biosynthesis; L-histidine biosynthesis; L-histidine from 5-phospho-alpha-D-ribose 1-diphosphate: step 7/9. In Acetobacter pasteurianus (Acetobacter turbidans), this protein is Histidinol-phosphate aminotransferase (hisC).